We begin with the raw amino-acid sequence, 536 residues long: GATA zinc finger domain-containing protein 9 (536 aa).

2 stretches are compositionally biased toward polar residues: residues 1-20 (MTSFLLFNPGSLQQQQQPHS) and 36-55 (CQSSFSTPLGGSNGINNPNA). Disordered stretches follow at residues 1-77 (MTSF…LSGS), 183-211 (SSSLSSEDDDCCYETEEDDNGEDGEVVRS), 237-258 (RSAFKKNKKDYHHGSSAGGGGS), 273-342 (QLHY…GFVQ), and 370-423 (ALFS…NISS). Positions 56 to 72 (TTNNTTTTTTTTTTTTN) are enriched in low complexity. The segment covering 188-206 (SEDDDCCYETEEDDNGEDG) has biased composition (acidic residues). Residues 237–247 (RSAFKKNKKDY) show a composition bias toward basic residues. The segment covering 273-283 (QLHYSNSMTDN) has biased composition (polar residues). Composition is skewed to low complexity over residues 318 to 335 (SNSNNNNNNNNNNNNNNN) and 379 to 399 (PSPTLGSSCGSSSPGLNNSGN). The GATA-type zinc-finger motif lies at 479 to 504 (CRHCGTTDTPEWRRGPDGRKSLCNAC).

In Dictyostelium discoideum (Social amoeba), this protein is GATA zinc finger domain-containing protein 9 (gtaI).